Here is a 158-residue protein sequence, read N- to C-terminus: Small ribosomal subunit protein uS7 (158 aa).

It belongs to the universal ribosomal protein uS7 family. Part of the 30S ribosomal subunit. Contacts proteins S9 and S11.

Functionally, one of the primary rRNA binding proteins, it binds directly to 16S rRNA where it nucleates assembly of the head domain of the 30S subunit. Is located at the subunit interface close to the decoding center, probably blocks exit of the E-site tRNA. The polypeptide is Small ribosomal subunit protein uS7 (Wolbachia pipientis subsp. Culex pipiens (strain wPip)).